The chain runs to 337 residues: Anthranilate phosphoribosyltransferase (337 aa).

Residues Gly-80, 83-84 (GD), Thr-88, 90-93 (NIST), 108-116 (KHGNRAVSS), and Ser-120 contribute to the 5-phospho-alpha-D-ribose 1-diphosphate site. Residue Gly-80 participates in anthranilate binding. A Mg(2+)-binding site is contributed by Ser-92. Asn-111 serves as a coordination point for anthranilate. Arg-166 lines the anthranilate pocket. Residues Asp-224 and Glu-225 each contribute to the Mg(2+) site.

Belongs to the anthranilate phosphoribosyltransferase family. In terms of assembly, homodimer. Mg(2+) serves as cofactor.

The catalysed reaction is N-(5-phospho-beta-D-ribosyl)anthranilate + diphosphate = 5-phospho-alpha-D-ribose 1-diphosphate + anthranilate. It participates in amino-acid biosynthesis; L-tryptophan biosynthesis; L-tryptophan from chorismate: step 2/5. Its function is as follows. Catalyzes the transfer of the phosphoribosyl group of 5-phosphorylribose-1-pyrophosphate (PRPP) to anthranilate to yield N-(5'-phosphoribosyl)-anthranilate (PRA). This Anaeromyxobacter dehalogenans (strain 2CP-C) protein is Anthranilate phosphoribosyltransferase.